The sequence spans 637 residues: Poly(A) polymerase beta (637 aa).

Low complexity predominate over residues 1 to 10 (MMPFPVTTQG). Residues 1–23 (MMPFPVTTQGPPQPAPPPNRYGV) form a disordered region. Residues 101–103 (FGS), Thr110, 114–116 (DID), Asp168, Lys229, Tyr238, and 247–248 (GV) each bind ATP. The Mg(2+) site is built by Asp114, Asp116, and Asp168. The interval 535 to 555 (SVPSSTSTMKTGPLISSSQGR) is disordered.

The protein belongs to the poly(A) polymerase family. As to quaternary structure, interacts with GSG1. It depends on Mg(2+) as a cofactor. Requires Mn(2+) as cofactor. As to expression, testis specific.

It is found in the nucleus. It carries out the reaction RNA(n) + ATP = RNA(n)-3'-adenine ribonucleotide + diphosphate. The polypeptide is Poly(A) polymerase beta (Homo sapiens (Human)).